Here is a 157-residue protein sequence, read N- to C-terminus: Small ribosomal subunit protein uS7 (157 aa).

This sequence belongs to the universal ribosomal protein uS7 family. Part of the 30S ribosomal subunit. Contacts proteins S9 and S11.

Functionally, one of the primary rRNA binding proteins, it binds directly to 16S rRNA where it nucleates assembly of the head domain of the 30S subunit. Is located at the subunit interface close to the decoding center, probably blocks exit of the E-site tRNA. The protein is Small ribosomal subunit protein uS7 of Koribacter versatilis (strain Ellin345).